The sequence spans 424 residues: DNA primase DnaG (424 aa).

The 75-residue stretch at 171–245 folds into the Toprim domain; sequence DDIIVVEGRA…DVDFVARAPP (75 aa). Mg(2+) is bound by residues glutamate 177, aspartate 219, and aspartate 221.

This sequence belongs to the archaeal DnaG primase family. As to quaternary structure, forms a ternary complex with MCM helicase and DNA. It depends on Mg(2+) as a cofactor.

It catalyses the reaction ssDNA + n NTP = ssDNA/pppN(pN)n-1 hybrid + (n-1) diphosphate.. Functionally, RNA polymerase that catalyzes the synthesis of short RNA molecules used as primers for DNA polymerase during DNA replication. The polypeptide is DNA primase DnaG (Methanocaldococcus jannaschii (strain ATCC 43067 / DSM 2661 / JAL-1 / JCM 10045 / NBRC 100440) (Methanococcus jannaschii)).